A 310-amino-acid polypeptide reads, in one-letter code: Vomeronasal type-1 receptor 93 (310 aa).

The Extracellular portion of the chain corresponds to 1–20 (MNKDNTLHVDTIMKITMFSE). The helical transmembrane segment at 21–41 (VSVGILANSILFFAHLCMLLG) threads the bilayer. Residues 42-59 (ENKPKPIHLYIASLSLTQ) lie on the Cytoplasmic side of the membrane. Residues 60-80 (LMLLITMGLIAADMFISQGIW) traverse the membrane as a helical segment. The Extracellular portion of the chain corresponds to 81-93 (DSTSCQSLIYLHR). A disulfide bridge links C85 with C172. The chain crosses the membrane as a helical span at residues 94 to 114 (LSRGFTLSAACLLNVFWMITL). Residues 115-134 (SSKKSRLTKFKHNSPHHISG) lie on the Cytoplasmic side of the membrane. The helical transmembrane segment at 135 to 155 (AFLLLCVLYMCFSSHLILSII) threads the bilayer. Residues 156–193 (ATPNLTSDNFMYVTKSCSFLPMCYSRTSMFSTTIAVRE) are Extracellular-facing. N159 carries N-linked (GlcNAc...) asparagine glycosylation. A helical transmembrane segment spans residues 194 to 214 (AFFIGLMALSSGYLVAFLWRH). Residues 215–238 (RKQAQHLHSTGLSSKASPEQRATE) are Cytoplasmic-facing. The chain crosses the membrane as a helical span at residues 239-259 (TILLLMSFFVVLYILENVVFY). At 260-269 (SRMKFKDGST) the chain is on the extracellular side. A helical membrane pass occupies residues 270-290 (FYCVQIIVSHSYATVSSFVFI). Topologically, residues 291–310 (FTEKRMTKILRSVCTRIINI) are cytoplasmic.

Belongs to the G-protein coupled receptor 1 family. As to expression, expressed in 1-4% of neurons of the vomeronasal organ. Only one pheromone receptor gene may be expressed in a particular neuron. Not expressed in the main olfactory epithelium.

Its subcellular location is the cell membrane. In terms of biological role, putative pheromone receptor implicated in the regulation of social as well as reproductive behavior. This chain is Vomeronasal type-1 receptor 93 (Vom1r93), found in Rattus norvegicus (Rat).